A 279-amino-acid polypeptide reads, in one-letter code: DegV domain-containing protein CPE1310 (279 aa).

Residues 4–277 (IKIITDSTCD…PKVCALFYVE (274 aa)) enclose the DegV domain. Hexadecanoate contacts are provided by Thr62 and Ser94.

In terms of biological role, may bind long-chain fatty acids, such as palmitate, and may play a role in lipid transport or fatty acid metabolism. The polypeptide is DegV domain-containing protein CPE1310 (Clostridium perfringens (strain 13 / Type A)).